Consider the following 287-residue polypeptide: MPFSRLFGKKEKNQMDDIDNIVEEGVQRVQELPMDKIFPNQFQPRTVFDQDKIDELARTIRIHGVIQPIVVREMEPDYYEIIAGERRFRAVLSLEMEKIPAIIQNLDDEEVAAIALIENLQREELTPIEEAKAYRSLLDMQEVTQEALAQRVGKSQSAIANKMRLLKLPETVQEAVLNKQISERHARSLLALETEEQQVALLAEIAENHWNVKQTEARIQEILGVKKPVATKKTKPKRQAISRDVRIAMNTIKQSVTMVKDNGMDLDFTEEETDDFYQITIQIPKKK.

The segment at residues 146-165 is a DNA-binding region (H-T-H motif); the sequence is EALAQRVGKSQSAIANKMRL.

Belongs to the ParB family.

The protein localises to the cytoplasm. Its subcellular location is the nucleoid. In terms of biological role, effects nucleoid occlusion by binding relatively nonspecifically to DNA and preventing the assembly of the division machinery in the vicinity of the nucleoid, especially under conditions that disturb the cell cycle. It helps to coordinate cell division and chromosome segregation by preventing the formation of the Z ring through the nucleoid, which would cause chromosome breakage. This chain is Nucleoid occlusion protein, found in Listeria monocytogenes serotype 4a (strain HCC23).